We begin with the raw amino-acid sequence, 194 residues long: Imidazoleglycerol-phosphate dehydratase (194 aa).

This sequence belongs to the imidazoleglycerol-phosphate dehydratase family.

The protein localises to the cytoplasm. It catalyses the reaction D-erythro-1-(imidazol-4-yl)glycerol 3-phosphate = 3-(imidazol-4-yl)-2-oxopropyl phosphate + H2O. Its pathway is amino-acid biosynthesis; L-histidine biosynthesis; L-histidine from 5-phospho-alpha-D-ribose 1-diphosphate: step 6/9. This Lactiplantibacillus plantarum (strain ATCC BAA-793 / NCIMB 8826 / WCFS1) (Lactobacillus plantarum) protein is Imidazoleglycerol-phosphate dehydratase.